Here is a 439-residue protein sequence, read N- to C-terminus: Chromosomal replication initiator protein DnaA (439 aa).

The domain I, interacts with DnaA modulators stretch occupies residues 1–75; the sequence is MESWSRCLER…GIREVVLAIG (75 aa). A domain II region spans residues 75-101; it reads GSRPKTTELPVPVDTTGRLSSTVPFNG. The segment at 102 to 319 is domain III, AAA+ region; the sequence is NLDTHYNFDN…GALNTLVARA (218 aa). The ATP site is built by glycine 147, glycine 149, lysine 150, and threonine 151. The domain IV, binds dsDNA stretch occupies residues 320 to 439; it reads NFTGRAVTIE…WDKLMRKFSE (120 aa).

It belongs to the DnaA family. Oligomerizes as a right-handed, spiral filament on DNA at oriC.

It is found in the cytoplasm. Its function is as follows. Plays an essential role in the initiation and regulation of chromosomal replication. ATP-DnaA binds to the origin of replication (oriC) to initiate formation of the DNA replication initiation complex once per cell cycle. Binds the DnaA box (a 9 base pair repeat at the origin) and separates the double-stranded (ds)DNA. Forms a right-handed helical filament on oriC DNA; dsDNA binds to the exterior of the filament while single-stranded (ss)DNA is stabiized in the filament's interior. The ATP-DnaA-oriC complex binds and stabilizes one strand of the AT-rich DNA unwinding element (DUE), permitting loading of DNA polymerase. After initiation quickly degrades to an ADP-DnaA complex that is not apt for DNA replication. Binds acidic phospholipids. The polypeptide is Chromosomal replication initiator protein DnaA (Xylella fastidiosa (strain 9a5c)).